A 338-amino-acid polypeptide reads, in one-letter code: Queuosine 5'-phosphate N-glycosylase/hydrolase (338 aa).

The residue at position 1 (methionine 1) is an N-acetylmethionine. The queuine site is built by histidine 51, phenylalanine 235, aspartate 237, aspartate 311, tyrosine 312, and aspartate 316. The active-site Nucleophile or transition state stabilizer is aspartate 237.

The protein belongs to the QNG1 protein family. In terms of tissue distribution, highly expressed in liver.

The catalysed reaction is queuosine 5'-phosphate + H2O = queuine + D-ribose 5-phosphate. In terms of biological role, catalyzes the hydrolysis of queuosine 5'-phosphate, releasing the nucleobase queuine (q). Is required for salvage of queuine from exogenous queuosine (Q) that is imported and then converted to queuosine 5'-phosphate intracellularly. The polypeptide is Queuosine 5'-phosphate N-glycosylase/hydrolase (Mus musculus (Mouse)).